A 704-amino-acid chain; its full sequence is DNA ligase (704 aa).

Residues 43–47, 92–93, and E124 each bind NAD(+); these read DADYD and SL. The active-site N6-AMP-lysine intermediate is the K126. NAD(+)-binding residues include R147, E182, K298, and K322. Zn(2+) contacts are provided by C427, C430, C445, and C451. Residues 625 to 704 enclose the BRCT domain; the sequence is PVESPIAGKI…DAWLRLIGDA (80 aa).

Belongs to the NAD-dependent DNA ligase family. LigA subfamily. It depends on Mg(2+) as a cofactor. Requires Mn(2+) as cofactor.

The catalysed reaction is NAD(+) + (deoxyribonucleotide)n-3'-hydroxyl + 5'-phospho-(deoxyribonucleotide)m = (deoxyribonucleotide)n+m + AMP + beta-nicotinamide D-nucleotide.. Its function is as follows. DNA ligase that catalyzes the formation of phosphodiester linkages between 5'-phosphoryl and 3'-hydroxyl groups in double-stranded DNA using NAD as a coenzyme and as the energy source for the reaction. It is essential for DNA replication and repair of damaged DNA. This is DNA ligase from Cereibacter sphaeroides (strain ATCC 17025 / ATH 2.4.3) (Rhodobacter sphaeroides).